Here is a 408-residue protein sequence, read N- to C-terminus: Alpha-2Da adrenergic receptor (408 aa).

Residues 1 to 30 (MSVTPTANSTEEAANITASPRLWPYTEPAS) lie on the Extracellular side of the membrane. N8 and N15 each carry an N-linked (GlcNAc...) asparagine glycan. A helical membrane pass occupies residues 31-55 (AIIILVVSLIILLTIVGNVLVIVAV). At 56–67 (LTSRALRAPQNL) the chain is on the cytoplasmic side. A helical membrane pass occupies residues 68–93 (FLVSLACADILVATLVIPFSLANEIM). The Extracellular segment spans residues 94-103 (GYWYFGSTWC). C103 and C176 are joined by a disulfide. The helical transmembrane segment at 104-126 (AFYLALDVLFCTSSIVHLCAISL) threads the bilayer. Over 127–147 (DRYWSVTKAVRYNLKRTPRRI) the chain is Cytoplasmic. A helical transmembrane segment spans residues 148-170 (KCMIAVVWLISAVISFPPLIMTK). Residues 171 to 181 (HDEKECLINDE) are Extracellular-facing. The chain crosses the membrane as a helical span at residues 182–205 (TWYILSSCAVSFFAPGLIMITVYC). At 206 to 332 (KIYRVAKQRS…QMREKRFTFV (127 aa)) the chain is on the cytoplasmic side. Residues 242–306 (FEKESPSSNS…SCRVSWAAHQ (65 aa)) are disordered. The span at 260 to 270 (ELDDIDLEESA) shows a compositional bias: acidic residues. Positions 277–286 (RGSRFSKRRR) are enriched in basic residues. The chain crosses the membrane as a helical span at residues 333-356 (LAVVMGVFVLCWFPFFFTYSLQAV). Residues 357–369 (CGERCGPPEALFK) are Extracellular-facing. The chain crosses the membrane as a helical span at residues 370–390 (LFFWIGYCNSSVNPIIYTIFN). At 391–408 (RDFRKAFKKVVCWSAQRT) the chain is on the cytoplasmic side.

This sequence belongs to the G-protein coupled receptor 1 family. Adrenergic receptor subfamily. ADRA2D sub-subfamily.

The protein localises to the cell membrane. Alpha-2 adrenergic receptors mediate the catecholamine-induced inhibition of adenylate cyclase through the action of G proteins. The order of potency for this receptor is dexmedetomidine &gt; norepinephrine &gt; epinephrine &gt; oxymetazoline. In Danio rerio (Zebrafish), this protein is Alpha-2Da adrenergic receptor (adra2da).